We begin with the raw amino-acid sequence, 164 residues long: Transcription factor E (164 aa).

Positions 5-87 constitute an HTH TFE/IIEalpha-type domain; sequence NDKVIRGYLL…LWRLDFSDIE (83 aa).

This sequence belongs to the TFE family. Monomer. Interaction with RNA polymerase subunits RpoF and RpoE is necessary for Tfe stimulatory transcription activity. Able to interact with Tbp and RNA polymerase in the absence of DNA promoter. Interacts both with the preinitiation and elongation complexes.

Functionally, transcription factor that plays a role in the activation of archaeal genes transcribed by RNA polymerase. Facilitates transcription initiation by enhancing TATA-box recognition by TATA-box-binding protein (Tbp), and transcription factor B (Tfb) and RNA polymerase recruitment. Not absolutely required for transcription in vitro, but particularly important in cases where Tbp or Tfb function is not optimal. It dynamically alters the nucleic acid-binding properties of RNA polymerases by stabilizing the initiation complex and destabilizing elongation complexes. Seems to translocate with the RNA polymerase following initiation and acts by binding to the non template strand of the transcription bubble in elongation complexes. The chain is Transcription factor E from Methanosarcina barkeri (strain Fusaro / DSM 804).